The primary structure comprises 334 residues: S-adenosylmethionine decarboxylase proenzyme 2 (334 aa).

Residue F7 coordinates substrate. Catalysis depends on residues E8 and E11. Substrate is bound at residue E67. S68 functions as the Schiff-base intermediate with substrate; via pyruvic acid in the catalytic mechanism. S68 is modified (pyruvic acid (Ser); by autocatalysis). The active-site Proton donor; for catalytic activity is the C82. F223 provides a ligand contact to substrate. Active-site proton acceptor; for processing activity residues include S229 and H243. E247 contributes to the substrate binding site. Phosphoserine is present on S298.

Belongs to the eukaryotic AdoMetDC family. In terms of assembly, heterotetramer of two alpha and two beta chains. It depends on pyruvate as a cofactor. Post-translationally, is synthesized initially as an inactive proenzyme. Formation of the active enzyme involves a self-maturation process in which the active site pyruvoyl group is generated from an internal serine residue via an autocatalytic post-translational modification. Two non-identical subunits are generated from the proenzyme in this reaction, and the pyruvate is formed at the N-terminus of the alpha chain, which is derived from the carboxyl end of the proenzyme. The post-translation cleavage follows an unusual pathway, termed non-hydrolytic serinolysis, in which the side chain hydroxyl group of the serine supplies its oxygen atom to form the C-terminus of the beta chain, while the remainder of the serine residue undergoes an oxidative deamination to produce ammonia and the pyruvoyl group blocking the N-terminus of the alpha chain.

It carries out the reaction S-adenosyl-L-methionine + H(+) = S-adenosyl 3-(methylsulfanyl)propylamine + CO2. It participates in amine and polyamine biosynthesis; S-adenosylmethioninamine biosynthesis; S-adenosylmethioninamine from S-adenosyl-L-methionine: step 1/1. In terms of biological role, essential for biosynthesis of the polyamines spermidine and spermine. Promotes maintenance and self-renewal of embryonic stem cells, by maintaining spermine levels. This Mus spretus (Western Mediterranean mouse) protein is S-adenosylmethionine decarboxylase proenzyme 2 (Amd2).